We begin with the raw amino-acid sequence, 509 residues long: Lanosterol 14-alpha demethylase (509 aa).

Residues 30-50 (GNLLSMLLIACAFTLSLVYLF) traverse the membrane as a helical segment. Cys455 contributes to the heme binding site.

It belongs to the cytochrome P450 family. Heme is required as a cofactor. In terms of processing, ubiquitinated by MARCHF6, leading to proteasomal degradation.

Its subcellular location is the endoplasmic reticulum membrane. The protein resides in the microsome membrane. It carries out the reaction a 14alpha-methyl steroid + 3 reduced [NADPH--hemoprotein reductase] + 3 O2 = a Delta(14) steroid + formate + 3 oxidized [NADPH--hemoprotein reductase] + 4 H2O + 4 H(+). It catalyses the reaction lanosterol + 3 reduced [NADPH--hemoprotein reductase] + 3 O2 = 4,4-dimethyl-5alpha-cholesta-8,14,24-trien-3beta-ol + formate + 3 oxidized [NADPH--hemoprotein reductase] + 4 H2O + 4 H(+). The catalysed reaction is 24,25-dihydrolanosterol + 3 reduced [NADPH--hemoprotein reductase] + 3 O2 = 4,4-dimethyl-8,14-cholestadien-3beta-ol + formate + 3 oxidized [NADPH--hemoprotein reductase] + 4 H2O + 4 H(+). The enzyme catalyses a 14alpha-methyl steroid + reduced [NADPH--hemoprotein reductase] + O2 = a 14alpha-hydroxymethyl steroid + oxidized [NADPH--hemoprotein reductase] + H2O + H(+). It carries out the reaction a 14alpha-hydroxymethyl steroid + reduced [NADPH--hemoprotein reductase] + O2 = a 14alpha-formyl steroid + oxidized [NADPH--hemoprotein reductase] + 2 H2O + H(+). It catalyses the reaction a 14alpha-formyl steroid + reduced [NADPH--hemoprotein reductase] + O2 = a Delta(14) steroid + formate + oxidized [NADPH--hemoprotein reductase] + H2O + 2 H(+). The catalysed reaction is lanosterol + reduced [NADPH--hemoprotein reductase] + O2 = 32-hydroxylanosterol + oxidized [NADPH--hemoprotein reductase] + H2O + H(+). The enzyme catalyses 32-hydroxylanosterol + reduced [NADPH--hemoprotein reductase] + O2 = 32-oxolanosterol + oxidized [NADPH--hemoprotein reductase] + 2 H2O + H(+). It carries out the reaction 32-oxolanosterol + reduced [NADPH--hemoprotein reductase] + O2 = 4,4-dimethyl-5alpha-cholesta-8,14,24-trien-3beta-ol + formate + oxidized [NADPH--hemoprotein reductase] + H2O + 2 H(+). It catalyses the reaction 24,25-dihydrolanosterol + reduced [NADPH--hemoprotein reductase] + O2 = 32-hydroxy-24,25-dihydrolanosterol + oxidized [NADPH--hemoprotein reductase] + H2O + H(+). The catalysed reaction is 32-hydroxy-24,25-dihydrolanosterol + reduced [NADPH--hemoprotein reductase] + O2 = 32-oxo-24,25-dihydrolanosterol + oxidized [NADPH--hemoprotein reductase] + 2 H2O + H(+). The enzyme catalyses 32-oxo-24,25-dihydrolanosterol + reduced [NADPH--hemoprotein reductase] + O2 = 4,4-dimethyl-8,14-cholestadien-3beta-ol + formate + oxidized [NADPH--hemoprotein reductase] + H2O + 2 H(+). Its pathway is steroid biosynthesis; zymosterol biosynthesis; zymosterol from lanosterol: step 1/6. Inhibited by azalanstat. Inhibited by azole antifungal agents ketoconazole, itraconazole and fluconazole. Sterol 14alpha-demethylase that plays a critical role in the cholesterol biosynthesis pathway, being cholesterol the major sterol component in mammalian membranes as well as a precursor for bile acid and steroid hormone synthesis. Cytochrome P450 monooxygenase that catalyzes the three-step oxidative removal of the 14alpha-methyl group (C-32) of sterols such as lanosterol (lanosta-8,24-dien-3beta-ol) and 24,25-dihydrolanosterol (DHL) in the form of formate, and converts the sterols to 4,4-dimethyl-5alpha-cholesta-8,14,24-trien-3beta-ol and 4,4-dimethyl-8,14-cholestadien-3beta-ol, respectively, which are intermediates of cholesterol biosynthesis. Can also demethylate substrates not intrinsic to mammals, such as eburicol (24-methylene-24,25-dihydrolanosterol), but at a lower rate than DHL. In Pongo abelii (Sumatran orangutan), this protein is Lanosterol 14-alpha demethylase.